Here is a 339-residue protein sequence, read N- to C-terminus: Longiborneol synthase CLM1 (339 aa).

Positions 1–17 (MLATPTLSNFDKPSLPS) are enriched in polar residues. Residues 1 to 21 (MLATPTLSNFDKPSLPSSEGG) are disordered. Mg(2+) is bound by residues Asp112, Asn241, Ser245, and Glu249. The short motif at 241–249 (NDVLSFYKE) is the NDXXSXXXE magnesium-binding motif element.

It belongs to the trichodiene synthase family. Requires Mg(2+) as cofactor. Mn(2+) serves as cofactor.

It catalyses the reaction (2E,6E)-farnesyl diphosphate + H2O = (-)-longiborneol + diphosphate. The protein operates within mycotoxin biosynthesis. Terpene cyclase involved in the biosynthesis of culmorin, a tricyclic sesquiterpene diol reported to have antifungal activity and some phytotoxicity to wheat coleoptile tissue, contributing to Fusarium head blight disease. The terpene cyclase CLM1 is responsible for the cyclization of farnesyl diphosphate into the intermediate longiborneol. Longiborneol is then hydroxylated in a regio- and endo-stereoselective manner at position C-11 by the cytochrome P450 monooxygenase CLM2 to produce culmorin. Additional non-specific oxygenases are also able to hydroxylate longiborneol at other sites than C-11 leading to 3-hydroxylongiborneol, 5-hydroxylongiborneol, 12-hydroxylongiborneol and 15-hydroxylongiborneol. Moreover, another oxygenase capable of installing a C-11 exo-hydroxy group in longiborneol can also yield 11-epi-acetylculmorin. The production of these longiborneol derivatives is dwarfed by the high abundance of culmorin, suggesting that CLM2 displays superior enzymatic activity to the unidentified, possibly promiscuous, additional oxygenases. The chain is Longiborneol synthase CLM1 from Gibberella zeae (strain ATCC MYA-4620 / CBS 123657 / FGSC 9075 / NRRL 31084 / PH-1) (Wheat head blight fungus).